The chain runs to 347 residues: Endophilin-A3 (347 aa).

A membrane-binding amphipathic helix region spans residues 1-21; that stretch reads MSVAGLKKQFHKASQLFSEKI. The BAR domain occupies 18–249; the sequence is SEKISGAEGT…LELRIALASQ (232 aa). The required for dimerization upon membrane association stretch occupies residues 60-87; the sequence is PNPAYRAKLGMLNTMSKLRGQVKATGYP. Positions 180–201 form a coiled coil; that stretch reads EEEIRQAVEKFEESKELAERSM. An interaction with ARC region spans residues 218–254; sequence FVEAALDYHRQSTEILQELQNKLELRIALASQVPRRD. Residues 255-284 form a disordered region; that stretch reads YMPKPVNTSSTNANGVEPSSSSKLTGTDIP. Residues 260 to 284 show a composition bias toward polar residues; the sequence is VNTSSTNANGVEPSSSSKLTGTDIP. Positions 285–344 constitute an SH3 domain; it reads SDQPCCRGLYDFEPENEGELGFKEGDIITLTNQIDENWYEGMLRGESGFFPINYVEVIVP.

The protein belongs to the endophilin family. In terms of assembly, interacts with SGIP1 and DYDC1. Interacts with FASLG. Interacts with ATXN2. Interacts with BIN2. Interacts with ARC, DNM1 and SYNJ1. In terms of tissue distribution, expressed at high level in testis and at lower level in brain and liver.

The protein resides in the cytoplasm. The protein localises to the early endosome membrane. In terms of biological role, implicated in endocytosis. May recruit other proteins to membranes with high curvature. In Rattus norvegicus (Rat), this protein is Endophilin-A3 (Sh3gl3).